The primary structure comprises 482 residues: Wax ester synthase/diacylglycerol acyltransferase 9 (482 aa).

At 1 to 195 the chain is on the cytoplasmic side; that stretch reads MEKKMKEEEE…FRLVLVVCST (195 aa). His140 serves as the catalytic Proton acceptor. Residues 196-216 form a helical membrane-spanning segment; sequence VRLIWNTLVDSFLCMATIFFL. Residues 217–328 are Lumenal-facing; it reads KDTDTPLKGK…AKGSKCRWGN (112 aa). A helical membrane pass occupies residues 329 to 349; it reads YISVILFPFTIALQSDPLVYL. The Cytoplasmic segment spans residues 350-366; that stretch reads SNVKSMIDRKKNSLITY. Residues 367 to 387 form a helical membrane-spanning segment; the sequence is IIYTFSEFVIKAFGINVAVAF. Topologically, residues 388–482 are lumenal; the sequence is QRKIMLNTTM…LEKGLPNHVN (95 aa). Asn394 carries an N-linked (GlcNAc...) asparagine glycan.

In the N-terminal section; belongs to the long-chain O-acyltransferase family. As to expression, mostly expressed in stems and siliques.

Its subcellular location is the cell membrane. It localises to the endoplasmic reticulum membrane. The enzyme catalyses an acyl-CoA + a 1,2-diacyl-sn-glycerol = a triacyl-sn-glycerol + CoA. It catalyses the reaction a long chain fatty alcohol + a fatty acyl-CoA = a wax ester + CoA. The protein operates within glycerolipid metabolism; triacylglycerol biosynthesis. It participates in lipid metabolism. Bifunctional wax ester synthase/diacylglycerol acyltransferase. Involved in cuticular wax biosynthesis. The protein is Wax ester synthase/diacylglycerol acyltransferase 9 of Arabidopsis thaliana (Mouse-ear cress).